Here is a 647-residue protein sequence, read N- to C-terminus: DNA mismatch repair protein MutL (647 aa).

This sequence belongs to the DNA mismatch repair MutL/HexB family.

In terms of biological role, this protein is involved in the repair of mismatches in DNA. It is required for dam-dependent methyl-directed DNA mismatch repair. May act as a 'molecular matchmaker', a protein that promotes the formation of a stable complex between two or more DNA-binding proteins in an ATP-dependent manner without itself being part of a final effector complex. The chain is DNA mismatch repair protein MutL from Bacillus cereus (strain G9842).